A 542-amino-acid chain; its full sequence is E3 ubiquitin-protein ligase RNF217 (542 aa).

Disordered regions lie at residues 1–140 (MGEE…TRVG) and 176–216 (APAS…TDSL). The segment covering 37–50 (SARAPPLRAASAEP) has biased composition (low complexity). Positions 122–132 (DEQQEAPPGEE) are enriched in acidic residues. Over residues 185–196 (PASPPGAPPVLN) the composition is skewed to pro residues. Residues 197-213 (PPSTRSSFPSPRLSLPT) show a composition bias toward low complexity. The TRIAD supradomain stretch occupies residues 259-478 (MVLMCRVCLE…LSIFGCKYRY (220 aa)). 10 residues coordinate Zn(2+): cysteine 263, cysteine 266, cysteine 283, cysteine 286, cysteine 383, cysteine 386, histidine 391, cysteine 396, cysteine 423, and cysteine 426. An RING-type 1 zinc finger spans residues 263–309 (CRVCLEDKPIKPLPCCKKAVCEECLKVYLSAQVQLGQVEIKCPITEC). Residues 328–396 (IKYKYFLELG…HSPWHEGVNC (69 aa)) form an IBR-type zinc finger. The segment at 423–452 (CPKCKIHIQRTEGCDHMTCSQCNTNFCYRC) adopts an RING-type 2; atypical zinc-finger fold. The active site involves cysteine 436. 6 residues coordinate Zn(2+): cysteine 441, cysteine 444, cysteine 449, cysteine 452, histidine 465, and cysteine 474. Residues 503 to 523 (LIMVLGLALGAIAVVIGLFVF) traverse the membrane as a helical segment.

This sequence belongs to the RBR family. RNF217 subfamily. In terms of assembly, interacts with HAX1. In terms of tissue distribution, mainly expressed in testis and skeletal muscle.

It is found in the membrane. Its subcellular location is the cytoplasm. It catalyses the reaction [E2 ubiquitin-conjugating enzyme]-S-ubiquitinyl-L-cysteine + [acceptor protein]-L-lysine = [E2 ubiquitin-conjugating enzyme]-L-cysteine + [acceptor protein]-N(6)-ubiquitinyl-L-lysine.. It functions in the pathway protein modification; protein ubiquitination. Its function is as follows. E3 ubiquitin-protein ligase which accepts ubiquitin from E2 ubiquitin-conjugating enzymes in the form of a thioester and then directly transfers the ubiquitin to targeted substrates. Mediates the degradation of the iron exporter ferroportin/SLC40A1 and thus regulates iron homeostasis. The sequence is that of E3 ubiquitin-protein ligase RNF217 (RNF217) from Homo sapiens (Human).